The chain runs to 357 residues: DNA integrity scanning protein DisA (357 aa).

Residues 3 to 141 (RPTLRETVAR…GGERHVVADS (139 aa)) form the DAC domain. ATP-binding positions include glycine 70, leucine 88, and 101 to 105 (TRHRS).

It belongs to the DisA family. Homooctamer. Mg(2+) is required as a cofactor.

It carries out the reaction 2 ATP = 3',3'-c-di-AMP + 2 diphosphate. Its function is as follows. Participates in a DNA-damage check-point. DisA forms globular foci that rapidly scan along the chromosomes searching for lesions. Functionally, also has diadenylate cyclase activity, catalyzing the condensation of 2 ATP molecules into cyclic di-AMP (c-di-AMP). c-di-AMP likely acts as a signaling molecule that may couple DNA integrity with a cellular process. The chain is DNA integrity scanning protein DisA from Mycolicibacterium paratuberculosis (strain ATCC BAA-968 / K-10) (Mycobacterium paratuberculosis).